A 338-amino-acid chain; its full sequence is Fructose-bisphosphate aldolase (338 aa).

Residues arginine 50 and lysine 138 each contribute to the substrate site. Glutamate 179 functions as the Proton acceptor in the catalytic mechanism. The active-site Schiff-base intermediate with dihydroxyacetone-P is lysine 221.

Belongs to the class I fructose-bisphosphate aldolase family.

The catalysed reaction is beta-D-fructose 1,6-bisphosphate = D-glyceraldehyde 3-phosphate + dihydroxyacetone phosphate. It participates in carbohydrate degradation; glycolysis; D-glyceraldehyde 3-phosphate and glycerone phosphate from D-glucose: step 4/4. This is Fructose-bisphosphate aldolase from Encephalitozoon cuniculi (strain GB-M1) (Microsporidian parasite).